Here is a 332-residue protein sequence, read N- to C-terminus: Malate dehydrogenase (332 aa).

15–21 (GAAGHIG) lines the NAD(+) pocket. 2 residues coordinate substrate: Arg-96 and Arg-102. Residues Asn-109 and 133 to 135 (VGN) contribute to the NAD(+) site. The substrate site is built by Asn-135 and Arg-166. His-191 (proton acceptor) is an active-site residue.

Belongs to the LDH/MDH superfamily. MDH type 2 family.

The catalysed reaction is (S)-malate + NAD(+) = oxaloacetate + NADH + H(+). In terms of biological role, catalyzes the reversible oxidation of malate to oxaloacetate. The sequence is that of Malate dehydrogenase from Mycolicibacterium vanbaalenii (strain DSM 7251 / JCM 13017 / BCRC 16820 / KCTC 9966 / NRRL B-24157 / PYR-1) (Mycobacterium vanbaalenii).